Here is a 1890-residue protein sequence, read N- to C-terminus: Callose synthase 9 (1890 aa).

Over 1–489 the chain is Cytoplasmic; it reads MSRAESSWER…EHRTFLHLYH (489 aa). Residues 490–510 traverse the membrane as a helical segment; that stretch reads SFHRLWIFLAMMFQALAIIAF. Residues 511-523 lie on the Extracellular side of the membrane; that stretch reads NKDDLTSRKTLLQ. A helical membrane pass occupies residues 524–544; that stretch reads ILSLGPTFVVMKFSESVLEVI. Topologically, residues 545–560 are cytoplasmic; it reads MMYGAYSTTRRLAVSR. The helical transmembrane segment at 561–581 threads the bilayer; sequence IFLRFIWFGLASVFISFLYVK. The Extracellular segment spans residues 582 to 591; sequence SLKAPNSDSP. The helical transmembrane segment at 592 to 612 threads the bilayer; it reads IVQLYLIVIAIYGGVQFFFSI. Over 613–658 the chain is Cytoplasmic; that stretch reads LMRIPTCHNIANKCDRWPVIRFFKWMRQERHYVGRGMYERTSDFIK. A helical transmembrane segment spans residues 659-679; that stretch reads YLLFWLVVLSAKFSFAYFLQI. Residues 680–722 are Extracellular-facing; sequence KPLVGPTRMIVKQNNIPYSWHDFVSRKNYNALTVASLWAPVVA. A helical membrane pass occupies residues 723–743; the sequence is IYLLDIHIFYTIFSAFLGFLL. Over 744–1457 the chain is Cytoplasmic; that stretch reads GARDRLGEIR…QLLDFFRMMS (714 aa). A helical transmembrane segment spans residues 1458–1478; it reads FFFTTVGFYLCTMLTVLTVYI. Residues 1479 to 1512 lie on the Extracellular side of the membrane; sequence FLYGRAYLALSGVGATIRERAILLDDTALSAALN. Residues 1513–1533 form a helical membrane-spanning segment; sequence AQFLFQIGVFTAVPMVLGFIL. Over 1534 to 1539 the chain is Cytoplasmic; that stretch reads EQGFLQ. Residues 1540–1560 traverse the membrane as a helical segment; that stretch reads AIVSFITMQFQLCTVFFTFSL. The Extracellular segment spans residues 1561–1609; it reads GTRTHYFGRTILHGGARYQATGRGFVVKHIKFSENYRLYSRSHFVKAME. 2 helical membrane-spanning segments follow: residues 1610 to 1630 and 1631 to 1651; these read VILLLVVYLAYGNDEAGAVSY and ILLTVSSWFLAVSWLFAPYLF. Topologically, residues 1652–1703 are extracellular; that stretch reads NPAGFEWQKVVEDFKEWTNWLFYRGGIGVKGAESWEAWWEEELSHIRTLSGR. A helical membrane pass occupies residues 1704-1724; that stretch reads IMETILSLRFFIFQYGIVYKL. The Cytoplasmic portion of the chain corresponds to 1725–1732; that stretch reads KLQGSDTS. A helical membrane pass occupies residues 1733–1753; sequence FAVYGWSWVAFAMIIVLFKVF. The Extracellular portion of the chain corresponds to 1754 to 1768; the sequence is TFSQKISVNFQLLLR. Residues 1769–1789 traverse the membrane as a helical segment; that stretch reads FIQGLSLLMALAGIIVAVVLT. The Cytoplasmic segment spans residues 1790–1795; the sequence is PLSVTD. The helical transmembrane segment at 1796–1816 threads the bilayer; the sequence is IFACVLAFIPTGWGILSIACA. Residues 1817 to 1838 are Extracellular-facing; the sequence is WKPVLKRMGMWKSIRSLARLYD. A helical membrane pass occupies residues 1839 to 1859; sequence ALMGMLIFLPVALCSWFPFVS. Over 1860–1890 the chain is Cytoplasmic; that stretch reads TFQTRMMFNQAFSRGLEISLILAGDNPNSGL.

The protein belongs to the glycosyltransferase 48 family.

The protein resides in the cell membrane. It carries out the reaction [(1-&gt;3)-beta-D-glucosyl](n) + UDP-alpha-D-glucose = [(1-&gt;3)-beta-D-glucosyl](n+1) + UDP + H(+). In terms of biological role, involved in sporophytic and gametophytic development. Required for normal plant development. During pollen formation, required for the entry of microspores into mitosis and microspore symmetric division. May be required for correct temporal and spatial control of callose deposition during pollen mitosis. During plant growth and development, callose is found as a transitory component of the cell plate in dividing cells, is a major component of pollen mother cell walls and pollen tubes, and is found as a structural component of plasmodesmatal canals. The sequence is that of Callose synthase 9 (CALS9) from Arabidopsis thaliana (Mouse-ear cress).